The following is a 92-amino-acid chain: MLSYIINPLLSIVYFILGNVSKLLTYILMKIMIFLLRAVNPYSLISNRGWLSLDSINPFKKEKRRESFLSSLNPFRKEETKKKEGFFSGWFG.

Functionally, homolog of shope fibroma virus T4A ORF. This is an uncharacterized protein from Swinepox virus (strain Kasza) (SWPV).